The sequence spans 400 residues: 3-phenylpropionate/cinnamic acid dioxygenase ferredoxin--NAD(+) reductase component (400 aa).

FAD is bound at residue 5-36 (TIIIVGGGQAAAMAAASLRQQGFTGELHLFSD). Residue 146-174 (SVVIVGAGTIGLELAASATQRRCKVTVIE) participates in NAD(+) binding.

This sequence belongs to the bacterial ring-hydroxylating dioxygenase ferredoxin reductase family. In terms of assembly, this dioxygenase system consists of four proteins: the two subunits of the hydroxylase component (HcaE and HcaF), a ferredoxin (HcaC) and a ferredoxin reductase (HcaD). FAD is required as a cofactor.

It carries out the reaction 2 reduced [2Fe-2S]-[ferredoxin] + NAD(+) + H(+) = 2 oxidized [2Fe-2S]-[ferredoxin] + NADH. Its pathway is aromatic compound metabolism; 3-phenylpropanoate degradation. Part of the multicomponent 3-phenylpropionate dioxygenase, that converts 3-phenylpropionic acid (PP) and cinnamic acid (CI) into 3-phenylpropionate-dihydrodiol (PP-dihydrodiol) and cinnamic acid-dihydrodiol (CI-dihydrodiol), respectively. In Escherichia coli O157:H7, this protein is 3-phenylpropionate/cinnamic acid dioxygenase ferredoxin--NAD(+) reductase component.